A 965-amino-acid chain; its full sequence is Meiosis-specific coiled-coil domain-containing protein MEIOC (965 aa).

Disordered regions lie at residues 1 to 22 and 946 to 965; these read MEVS…EGPE and VHES…TSKH. The segment covering 949–965 has biased composition (polar residues); the sequence is SINSSNPMNQRGETSKH.

In terms of assembly, interacts with YTHDC2; binds transcripts that regulate the mitotic cell cycle inhibiting progression into metaphase, thereby allowing meiotic prophase to proceed normally. Interacts with RBM46. As to expression, expressed specifically in fetal ovary and postnatal and adult testes (at protein level). In adult testis expressed in spermatocytes, beginning in preleptotene and extending through most stages of meiotic prophase I, including leptotene, zygotene, and pachytene.

The protein resides in the cytoplasm. The protein localises to the nucleus. Its function is as follows. Is required for meiosis completion in both male and female germ cells. Confers stability to numerous meiotic mRNAs in gonads allowing proper initiation and progression into meiosis prophase I. The function may involve YTHDC2 and is independent of induction by retinoic acid (RA). Maintains an extended meiotic prophase I by properly promoting the transition from a mitotic to a meiotic cell cycle program by binding transcripts through its interaction with YTHDC2 that regulate the mitotic cell cycle. In Mus musculus (Mouse), this protein is Meiosis-specific coiled-coil domain-containing protein MEIOC.